Here is a 55-residue protein sequence, read N- to C-terminus: Riparin-1.4 (55 aa).

Positions 1–15 (MKIIVVLAVLMLVSA) are cleaved as a signal peptide. The propeptide occupies 16-41 (QVCLVSAAEMGHSSDNELSSRDLVKR). Cysteines 47 and 53 form a disulfide. Residues 54–55 (NH) constitute a propeptide that is removed on maturation.

In terms of tissue distribution, expressed by the skin glands.

It is found in the secreted. The polypeptide is Riparin-1.4 (Crinia riparia (Streambank froglet)).